Here is a 493-residue protein sequence, read N- to C-terminus: tRNA (uracil-5-)-methyltransferase homolog B (493 aa).

The transit peptide at 1 to 14 (MHNPRLFLSRAGFF) directs the protein to the mitochondrion. Residues Gln-312, Glu-362, and Asn-412 each contribute to the S-adenosyl-L-methionine site. Cys-440 functions as the Nucleophile in the catalytic mechanism. Glu-486 (proton acceptor) is an active-site residue.

This sequence belongs to the class I-like SAM-binding methyltransferase superfamily. RNA M5U methyltransferase family.

Its subcellular location is the mitochondrion matrix. It carries out the reaction uridine(54) in tRNA + S-adenosyl-L-methionine = 5-methyluridine(54) in tRNA + S-adenosyl-L-homocysteine + H(+). The catalysed reaction is a uridine in 12S rRNA + S-adenosyl-L-methionine = a 5-methyluridine in 12S rRNA + S-adenosyl-L-homocysteine + H(+). Functionally, mitochondrial S-adenosyl-L-methionine-dependent methyltransferase that catalyzes the formation of 5-methyl-uridine in tRNAs and 12S rRNA. Catalyzes the methylation of uridine at position 54 (m5U54) in all tRNAs. Specifically methylates the uridine in position 425 of 12S rRNA (m5U425). Does not affect RNA stability or mitochondrial translation. The chain is tRNA (uracil-5-)-methyltransferase homolog B from Mus musculus (Mouse).